Consider the following 214-residue polypeptide: Thymidylate kinase (214 aa).

Residue 7-14 (GIDGAGKS) coordinates ATP.

Belongs to the thymidylate kinase family.

It carries out the reaction dTMP + ATP = dTDP + ADP. In terms of biological role, phosphorylation of dTMP to form dTDP in both de novo and salvage pathways of dTTP synthesis. The chain is Thymidylate kinase from Chlorobaculum tepidum (strain ATCC 49652 / DSM 12025 / NBRC 103806 / TLS) (Chlorobium tepidum).